Reading from the N-terminus, the 460-residue chain is Glutamate--tRNA ligase 2 (460 aa).

Residues 8 to 18 (PSPTGFLHVGG) carry the 'HIGH' region motif. The 'KMSKS' region signature appears at 237–241 (KLSKR). Residue Lys-240 participates in ATP binding.

It belongs to the class-I aminoacyl-tRNA synthetase family. Glutamate--tRNA ligase type 1 subfamily. Monomer.

The protein resides in the cytoplasm. The catalysed reaction is tRNA(Glu) + L-glutamate + ATP = L-glutamyl-tRNA(Glu) + AMP + diphosphate. Catalyzes the attachment of glutamate to tRNA(Glu) in a two-step reaction: glutamate is first activated by ATP to form Glu-AMP and then transferred to the acceptor end of tRNA(Glu). The protein is Glutamate--tRNA ligase 2 of Campylobacter fetus subsp. fetus (strain 82-40).